The following is a 128-amino-acid chain: Protein ApaG (128 aa).

The ApaG domain occupies 1–123 (MTSSPDITVS…FRLDIAPESG (123 aa)).

The polypeptide is Protein ApaG (Deinococcus radiodurans (strain ATCC 13939 / DSM 20539 / JCM 16871 / CCUG 27074 / LMG 4051 / NBRC 15346 / NCIMB 9279 / VKM B-1422 / R1)).